The primary structure comprises 76 residues: Zinc finger protein 706 (76 aa).

Residues 1-13 (MARGQQKIQSQQK) are compositionally biased toward low complexity. 2 disordered regions span residues 1–32 (MARG…QKAA) and 53–76 (TFKQ…DVQA). Composition is skewed to basic and acidic residues over residues 17–31 (KQAE…DQKA) and 53–62 (TFKQHFESKH). A C2H2-type zinc finger spans residues 39–62 (YTCTVCRTQMPDPKTFKQHFESKH).

The protein localises to the cytoplasm. It localises to the nucleus. Transcription repressor involved in the exit of embryonic stem cells (ESCs) from self-renewal. The chain is Zinc finger protein 706 from Gallus gallus (Chicken).